Reading from the N-terminus, the 378-residue chain is Cytochrome b (378 aa).

4 helical membrane-spanning segments follow: residues 35 to 55, 79 to 101, 114 to 134, and 180 to 200; these read FGSL…FLAM, WIIR…CHIG, TWIM…LGYV, and FFSL…LHIF. Heme b contacts are provided by H85 and H99. Heme b is bound by residues H184 and H198. H203 is an a ubiquinone binding site. 4 helical membrane passes run 226-246, 290-310, 326-346, and 350-370; these read YSAK…FISF, LGGV…PLTH, FFWL…QPVC, and VMCS…CGPL.

Belongs to the cytochrome b family. In terms of assembly, the main subunits of complex b-c1 are: cytochrome b, cytochrome c1 and the Rieske protein. It depends on heme b as a cofactor.

It is found in the mitochondrion inner membrane. Its function is as follows. Component of the ubiquinol-cytochrome c reductase complex (complex III or cytochrome b-c1 complex) that is part of the mitochondrial respiratory chain. The b-c1 complex mediates electron transfer from ubiquinol to cytochrome c. Contributes to the generation of a proton gradient across the mitochondrial membrane that is then used for ATP synthesis. The polypeptide is Cytochrome b (mt:Cyt-b) (Paraspadella gotoi (Arrow worm)).